The following is a 255-amino-acid chain: 5'-nucleotidase SurE (255 aa).

A divalent metal cation-binding residues include Asp-8, Asp-9, Ser-40, and Asn-92.

This sequence belongs to the SurE nucleotidase family. The cofactor is a divalent metal cation.

It localises to the cytoplasm. The enzyme catalyses a ribonucleoside 5'-phosphate + H2O = a ribonucleoside + phosphate. In terms of biological role, nucleotidase that shows phosphatase activity on nucleoside 5'-monophosphates. This is 5'-nucleotidase SurE from Brucella suis (strain ATCC 23445 / NCTC 10510).